A 150-amino-acid polypeptide reads, in one-letter code: MLGAALRRCAVAATAWAGPRGLLHSAPTPGPAAAIHSVRCYSHGSSETDEEFDARWVTXFNKPDIDAWELRKGINTLVTYDLVPEPKIIDAALRACRRLNDFASTVRILEAVKDKAGPHKEIYPYVIQELRPTLNELGISTPEELGLDKV.

Residues 1 to 41 (MLGAALRRCAVAATAWAGPRGLLHSAPTPGPAAAIHSVRCY) constitute a mitochondrion transit peptide. The short motif at 2-17 (LGAALRRCAVAATAWA) is the SIFI-degron element. Residues Lys-87 and Lys-113 each carry the N6-acetyllysine modification. Thr-141 is subject to Phosphothreonine.

This sequence belongs to the cytochrome c oxidase subunit 5A family. As to quaternary structure, component of the cytochrome c oxidase (complex IV, CIV), a multisubunit enzyme composed of 14 subunits. The complex is composed of a catalytic core of 3 subunits MT-CO1, MT-CO2 and MT-CO3, encoded in the mitochondrial DNA, and 11 supernumerary subunits COX4I, COX5A, COX5B, COX6A, COX6B, COX6C, COX7A, COX7B, COX7C, COX8 and NDUFA4, which are encoded in the nuclear genome. The complex exists as a monomer or a dimer and forms supercomplexes (SCs) in the inner mitochondrial membrane with NADH-ubiquinone oxidoreductase (complex I, CI) and ubiquinol-cytochrome c oxidoreductase (cytochrome b-c1 complex, complex III, CIII), resulting in different assemblies (supercomplex SCI(1)III(2)IV(1) and megacomplex MCI(2)III(2)IV(2)). Interacts with AFG1L. Interacts with RAB5IF. In response to mitochondrial stress, the precursor protein is ubiquitinated by the SIFI complex in the cytoplasm before mitochondrial import, leading to its degradation. Within the SIFI complex, UBR4 initiates ubiquitin chain that are further elongated or branched by KCMF1.

It localises to the mitochondrion inner membrane. It participates in energy metabolism; oxidative phosphorylation. Functionally, component of the cytochrome c oxidase, the last enzyme in the mitochondrial electron transport chain which drives oxidative phosphorylation. The respiratory chain contains 3 multisubunit complexes succinate dehydrogenase (complex II, CII), ubiquinol-cytochrome c oxidoreductase (cytochrome b-c1 complex, complex III, CIII) and cytochrome c oxidase (complex IV, CIV), that cooperate to transfer electrons derived from NADH and succinate to molecular oxygen, creating an electrochemical gradient over the inner membrane that drives transmembrane transport and the ATP synthase. Cytochrome c oxidase is the component of the respiratory chain that catalyzes the reduction of oxygen to water. Electrons originating from reduced cytochrome c in the intermembrane space (IMS) are transferred via the dinuclear copper A center (CU(A)) of subunit 2 and heme A of subunit 1 to the active site in subunit 1, a binuclear center (BNC) formed by heme A3 and copper B (CU(B)). The BNC reduces molecular oxygen to 2 water molecules using 4 electrons from cytochrome c in the IMS and 4 protons from the mitochondrial matrix. The protein is Cytochrome c oxidase subunit 5A, mitochondrial (COX5A) of Saimiri sciureus (Common squirrel monkey).